A 353-amino-acid polypeptide reads, in one-letter code: Protein RecA (353 aa).

67–74 (GPESSGKT) contributes to the ATP binding site. Positions 330–353 (SNPNSTPDFSVDDSEGVAETNEDF) are disordered. Positions 339-353 (SVDDSEGVAETNEDF) are enriched in acidic residues.

It belongs to the RecA family.

The protein localises to the cytoplasm. In terms of biological role, can catalyze the hydrolysis of ATP in the presence of single-stranded DNA, the ATP-dependent uptake of single-stranded DNA by duplex DNA, and the ATP-dependent hybridization of homologous single-stranded DNAs. It interacts with LexA causing its activation and leading to its autocatalytic cleavage. This chain is Protein RecA, found in Escherichia coli O157:H7 (strain EC4115 / EHEC).